The chain runs to 394 residues: Tryptophan synthase beta chain (394 aa).

Lys84 carries the N6-(pyridoxal phosphate)lysine modification.

Belongs to the TrpB family. In terms of assembly, tetramer of two alpha and two beta chains. Requires pyridoxal 5'-phosphate as cofactor.

The enzyme catalyses (1S,2R)-1-C-(indol-3-yl)glycerol 3-phosphate + L-serine = D-glyceraldehyde 3-phosphate + L-tryptophan + H2O. It functions in the pathway amino-acid biosynthesis; L-tryptophan biosynthesis; L-tryptophan from chorismate: step 5/5. The beta subunit is responsible for the synthesis of L-tryptophan from indole and L-serine. The protein is Tryptophan synthase beta chain of Clostridium acetobutylicum (strain ATCC 824 / DSM 792 / JCM 1419 / IAM 19013 / LMG 5710 / NBRC 13948 / NRRL B-527 / VKM B-1787 / 2291 / W).